A 397-amino-acid polypeptide reads, in one-letter code: GDP-mannose transporter 1 (397 aa).

The tract at residues 1-57 (MSKPFVPTPNISRPATPSSLDYGKDEASSTLLRDMGERGDRERKDREERDKKEAMPS) is disordered. At 1–61 (MSKPFVPTPN…KEAMPSGQDQ (61 aa)) the chain is on the cytoplasmic side. Over residues 9–19 (PNISRPATPSS) the composition is skewed to polar residues. Residues 34-54 (DMGERGDRERKDREERDKKEA) show a composition bias toward basic and acidic residues. A helical membrane pass occupies residues 62–82 (VLPILSYCAASIMMTVVNKYV). The Lumenal portion of the chain corresponds to 83 to 87 (VSGAN). The N-linked (GlcNAc...) asparagine glycan is linked to Asn-87. The chain crosses the membrane as a helical span at residues 88-108 (FTMTFLLLAIQSSVCVLAVTT). The Cytoplasmic segment spans residues 109–124 (VKKLGFISFRDFDKND). Residues 125–142 (AKAWWPISTLLVAVIYTG) traverse the membrane as a helical segment. At 143–145 (SKA) the chain is on the lumenal side. A helical transmembrane segment spans residues 146–168 (LQFLSIPVYTIFKNLTIILIAYG). Over 169-174 (EVFMFN) the chain is Cytoplasmic. The helical transmembrane segment at 175–197 (GAVSGLTLCSFALMVGSSIIAAW) threads the bilayer. Residues 198 to 228 (SDITSVWNKEPELDPITGLEITVGPVSTIGG) are Lumenal-facing. A helical transmembrane segment spans residues 229–249 (LNAGYIWMALNCFVSAAYVLF). Over 250–272 (MRKRIKVTGFKDWDSMYYNNLLS) the chain is Cytoplasmic. The helical transmembrane segment at 273 to 293 (IPILVVFSLVIEDWGSESLAL) threads the bilayer. At 294 to 300 (NFPASNR) the chain is on the lumenal side. Residues 301-321 (VLLLSAMAFSGAAAVFISYST) form a helical membrane-spanning segment. The Cytoplasmic segment spans residues 322–332 (AWCVRITGSTT). A helical membrane pass occupies residues 333–353 (YSMVGALNKLPVAASGILFFG). Over 354-355 (DP) the chain is Lumenal. A helical membrane pass occupies residues 356 to 376 (ANFGNISAIAVGGVAGVVYAV). Residues 377–397 (AKTNQAKVEKARQARAAGGRP) are Cytoplasmic-facing.

This sequence belongs to the TPT transporter family. SLC35D subfamily. Homooligomer.

It localises to the golgi apparatus membrane. Its subcellular location is the cytoplasmic vesicle membrane. The protein localises to the endoplasmic reticulum membrane. Involved in the import of GDP-mannose from the cytoplasm into the Golgi lumen. Involved in capsule synthesis. The polypeptide is GDP-mannose transporter 1 (GMT1) (Cryptococcus neoformans var. neoformans serotype D (strain B-3501A) (Filobasidiella neoformans)).